The primary structure comprises 398 residues: Ethanolaminephosphotransferase 1 (398 aa).

Alanine 2 is modified (N-acetylalanine). A run of 10 helical transmembrane segments spans residues 47 to 69 (WLAPNLITFSGFMLLVFNFLLLT), 84 to 103 (HVPDWVWIVVGILNFAAYTL), 123 to 145 (LFDHGLDSWSCVYFVVTVYSIFG), 150 to 172 (GVSVFVLYLLLWVVLFSFILSHW), 179 to 201 (VLFLPWGYDISQVTISFVYIVTA), 221 to 243 (LFTAMIIGCALCVTLPMSLLNFF), 256 to 278 (VYEAMVPFFSPCLLFTLCTVWIL), 291 to 310 (IFYFMVGTAFANITCQLIVC), 319 to 341 (TLNWLLLPLLLVVAAVIVGAATS), and 345 to 367 (SALLYTLTAAFTLAHIHYGVQVV). Position 388 (selenocysteine 388) is a non-standard amino acid, selenocysteine.

Belongs to the CDP-alcohol phosphatidyltransferase class-I family. The cofactor is Mg(2+). Requires Mn(2+) as cofactor.

The protein resides in the endoplasmic reticulum membrane. It carries out the reaction CDP-ethanolamine + a 1,2-diacyl-sn-glycerol = a 1,2-diacyl-sn-glycero-3-phosphoethanolamine + CMP + H(+). The catalysed reaction is 1-O-alkyl-2-acyl-sn-glycerol + CDP-ethanolamine = a 1-O-alkyl-2-acyl-sn-glycero-3-phosphoethanolamine + CMP + H(+). It participates in phospholipid metabolism; phosphatidylethanolamine biosynthesis; phosphatidylethanolamine from ethanolamine: step 3/3. Ethanolaminephosphotransferase that catalyzes the transfer of phosphoethanolamine (PE) from CDP-ethanolamine to lipid acceptors, the final step in the synthesis of PE via the 'Kennedy' pathway. PE is the second most abundant phospholipid of membranes in mammals and is involved in various membrane-related cellular processes. The enzyme is critical for the synthesis of several PE species and also catalyzes the synthesis of plasmanyl-PE, a lipid required for proper myelination and neurodevelopment, from 1-alkyl-2-acylglycerol. The sequence is that of Ethanolaminephosphotransferase 1 from Mus musculus (Mouse).